Consider the following 792-residue polypeptide: Ubiquitin carboxyl-terminal hydrolase 10 (792 aa).

Ala2 carries the post-translational modification N-acetylalanine. The tract at residues 2-99 (ALHNPQYIFG…ILGCTTSKKI (98 aa)) is interaction with p53/TP53. Residues 6 to 21 (PQYIFGDFSPDEFNQF) are G3BP1-binding. Thr24 bears the Phosphothreonine mark. Residues 126–164 (SNAEAETLENDSGAGGLGQRERKKKKKRPPGYYSYLKDG) form a disordered region. Phosphoserine is present on residues Ser208 and Ser223. A compositionally biased stretch (basic and acidic residues) spans 300–309 (DEGADLDPAK). A disordered region spans residues 300-323 (DEGADLDPAKPESQSPPAESALSA). Ser314 bears the Phosphoserine mark. A Phosphoserine; by ATM modification is found at Ser330. Residues 350–369 (PMAYVETKCSPPVPSPLASE) form a disordered region. Ser359 and Ser364 each carry phosphoserine. Positions 409–789 (RGLINKGNWC…TAYLLYYRRV (381 aa)) constitute a USP domain. The Nucleophile role is filled by Cys418. Position 541 is a phosphoserine (Ser541). The interval 542–580 (PTHEKHSVSNGPRSDLIEDEELEDTGKGSEDEWEQVGPK) is disordered. At Thr566 the chain carries Phosphothreonine. Ser570 carries the post-translational modification Phosphoserine. Residue His743 is the Proton acceptor of the active site.

Belongs to the peptidase C19 family. USP10 subfamily. In terms of assembly, found in a deubiquitination complex with TANK, USP10 and ZC3H12A; this complex inhibits genotoxic stress- or interleukin-1-beta (IL1B)-mediated NF-kappa-B activation by promoting IKBKG or TRAF6 deubiquitination. Interacts with IKBKG; this interaction increases in response to DNA damage. Interacts with TANK; this interaction increases in response to DNA damage. Interacts with TRAF6; this interaction increases in response to DNA damage. Interacts with ZC3H12A; this interaction increases in response to DNA damage. Interacts with G3BP1 (via NTF2 domain) and G3BP2 (via NTF2 domain); inhibiting stress granule formation. Post-translationally, phosphorylated by ATM following DNA damage, leading to stabilization and translocation it to the nucleus. In terms of processing, ubiquitinated. Deubiquitinated by USP13.

It localises to the cytoplasm. The protein localises to the nucleus. It is found in the early endosome. The enzyme catalyses Thiol-dependent hydrolysis of ester, thioester, amide, peptide and isopeptide bonds formed by the C-terminal Gly of ubiquitin (a 76-residue protein attached to proteins as an intracellular targeting signal).. Specifically inhibited by spautin-1 (specific and potent autophagy inhibitor-1), a derivative of MBCQ that binds to USP10 and inhibits deubiquitinase activity. Regulated by PIK3C3/VPS34-containing complexes. Functionally, hydrolase that can remove conjugated ubiquitin from target proteins such as p53/TP53, RPS2/us5, RPS3/us3, RPS10/eS10, BECN1, SNX3 and CFTR. Acts as an essential regulator of p53/TP53 stability: in unstressed cells, specifically deubiquitinates p53/TP53 in the cytoplasm, leading to counteract MDM2 action and stabilize p53/TP53. Following DNA damage, translocates to the nucleus and deubiquitinates p53/TP53, leading to regulate the p53/TP53-dependent DNA damage response. Component of a regulatory loop that controls autophagy and p53/TP53 levels: mediates deubiquitination of BECN1, a key regulator of autophagy, leading to stabilize the PIK3C3/VPS34-containing complexes. In turn, PIK3C3/VPS34-containing complexes regulate USP10 stability, suggesting the existence of a regulatory system by which PIK3C3/VPS34-containing complexes regulate p53/TP53 protein levels via USP10 and USP13. Does not deubiquitinate MDM2. Plays a key role in 40S ribosome subunit recycling when a ribosome has stalled during translation: acts both by inhibiting formation of stress granules, which store stalled translation pre-initiation complexes, and mediating deubiquitination of 40S ribosome subunits. Acts as a negative regulator of stress granules formation by lowering G3BP1 and G3BP2 valence, thereby preventing G3BP1 and G3BP2 ability to undergo liquid-liquid phase separation (LLPS) and assembly of stress granules. Promotes 40S ribosome subunit recycling following ribosome dissociation in response to ribosome stalling by mediating deubiquitination of 40S ribosomal proteins RPS2/us5, RPS3/us3 and RPS10/eS10, thereby preventing their degradation by the proteasome. Part of a ribosome quality control that takes place when ribosomes have stalled during translation initiation (iRQC): USP10 acts by removing monoubiquitination of RPS2/us5 and RPS3/us3, promoting 40S ribosomal subunit recycling. Deubiquitinates CFTR in early endosomes, enhancing its endocytic recycling. Involved in a TANK-dependent negative feedback response to attenuate NF-kappa-B activation via deubiquitinating IKBKG or TRAF6 in response to interleukin-1-beta (IL1B) stimulation or upon DNA damage. Deubiquitinates TBX21 leading to its stabilization. Plays a negative role in the RLR signaling pathway upon RNA virus infection by blocking the RIGI-mediated MAVS activation. Mechanistically, removes the unanchored 'Lys-63'-linked polyubiquitin chains of MAVS to inhibit its aggregation, essential for its activation. The chain is Ubiquitin carboxyl-terminal hydrolase 10 (Usp10) from Mus musculus (Mouse).